We begin with the raw amino-acid sequence, 592 residues long: Aspartate--tRNA ligase (592 aa).

Residue glutamate 173 coordinates L-aspartate. The interval 197 to 200 (QLFK) is aspartate. Arginine 219 serves as a coordination point for L-aspartate. ATP-binding positions include 219–221 (RDE) and glutamine 228. Histidine 448 is a binding site for L-aspartate. Residue glutamate 482 participates in ATP binding. Arginine 489 is an L-aspartate binding site. An ATP-binding site is contributed by 534-537 (GLDR).

The protein belongs to the class-II aminoacyl-tRNA synthetase family. Type 1 subfamily. In terms of assembly, homodimer.

Its subcellular location is the cytoplasm. It catalyses the reaction tRNA(Asp) + L-aspartate + ATP = L-aspartyl-tRNA(Asp) + AMP + diphosphate. Its function is as follows. Catalyzes the attachment of L-aspartate to tRNA(Asp) in a two-step reaction: L-aspartate is first activated by ATP to form Asp-AMP and then transferred to the acceptor end of tRNA(Asp). This is Aspartate--tRNA ligase from Shewanella putrefaciens (strain CN-32 / ATCC BAA-453).